A 328-amino-acid chain; its full sequence is WUSCHEL-related homeobox 6 (328 aa).

The span at 1–11 (MEGSSNSPDRQ) shows a compositional bias: polar residues. The interval 1–45 (MEGSSNSPDRQSSGGSPPEERGGGGSGGGGGRSAAGEPVRSRWTP) is disordered. Residues 23-33 (GGGSGGGGGRS) show a composition bias toward gly residues. The segment at residues 38 to 102 (PVRSRWTPKP…NRRSRSRRRQ (65 aa)) is a DNA-binding region (homeobox; WUS-type).

It belongs to the WUS homeobox family.

Its subcellular location is the nucleus. Transcription factor which may be involved in developmental processes. The chain is WUSCHEL-related homeobox 6 (WOX6) from Oryza sativa subsp. japonica (Rice).